Reading from the N-terminus, the 71-residue chain is Translation initiation factor IF-1 (71 aa).

An S1-like domain is found at 1–71; it reads MKEKNIEMQG…SKGRIIFRSR (71 aa).

The protein belongs to the IF-1 family. As to quaternary structure, component of the 30S ribosomal translation pre-initiation complex which assembles on the 30S ribosome in the order IF-2 and IF-3, IF-1 and N-formylmethionyl-tRNA(fMet); mRNA recruitment can occur at any time during PIC assembly.

The protein resides in the cytoplasm. One of the essential components for the initiation of protein synthesis. Stabilizes the binding of IF-2 and IF-3 on the 30S subunit to which N-formylmethionyl-tRNA(fMet) subsequently binds. Helps modulate mRNA selection, yielding the 30S pre-initiation complex (PIC). Upon addition of the 50S ribosomal subunit IF-1, IF-2 and IF-3 are released leaving the mature 70S translation initiation complex. In Buchnera aphidicola subsp. Cinara cedri (strain Cc), this protein is Translation initiation factor IF-1.